The sequence spans 92 residues: Large ribosomal subunit protein eL43 (92 aa).

Zn(2+) is bound by residues cysteine 39, cysteine 42, cysteine 57, and cysteine 60. Residues 39-60 (CSFCGKTKMKRRAVGIWHCGSC) form a C4-type zinc finger.

This sequence belongs to the eukaryotic ribosomal protein eL43 family. As to quaternary structure, component of the large ribosomal subunit.

The protein resides in the cytoplasm. Component of the large ribosomal subunit. The ribosome is a large ribonucleoprotein complex responsible for the synthesis of proteins in the cell. The polypeptide is Large ribosomal subunit protein eL43 (Rpl37a) (Mus musculus (Mouse)).